Consider the following 184-residue polypeptide: Protein GrpE (184 aa).

Residues 1–26 (MANEQNEQAQDIQNEQVEQSNEQTQA) show a composition bias toward polar residues. The interval 1–34 (MANEQNEQAQDIQNEQVEQSNEQTQAEGVEQAND) is disordered.

Belongs to the GrpE family. Homodimer.

It is found in the cytoplasm. Functionally, participates actively in the response to hyperosmotic and heat shock by preventing the aggregation of stress-denatured proteins, in association with DnaK and GrpE. It is the nucleotide exchange factor for DnaK and may function as a thermosensor. Unfolded proteins bind initially to DnaJ; upon interaction with the DnaJ-bound protein, DnaK hydrolyzes its bound ATP, resulting in the formation of a stable complex. GrpE releases ADP from DnaK; ATP binding to DnaK triggers the release of the substrate protein, thus completing the reaction cycle. Several rounds of ATP-dependent interactions between DnaJ, DnaK and GrpE are required for fully efficient folding. The chain is Protein GrpE from Acinetobacter baumannii (strain AB307-0294).